The sequence spans 89 residues: Small ribosomal subunit protein uS15 (89 aa).

The protein belongs to the universal ribosomal protein uS15 family. As to quaternary structure, part of the 30S ribosomal subunit. Forms a bridge to the 50S subunit in the 70S ribosome, contacting the 23S rRNA.

In terms of biological role, one of the primary rRNA binding proteins, it binds directly to 16S rRNA where it helps nucleate assembly of the platform of the 30S subunit by binding and bridging several RNA helices of the 16S rRNA. Its function is as follows. Forms an intersubunit bridge (bridge B4) with the 23S rRNA of the 50S subunit in the ribosome. This is Small ribosomal subunit protein uS15 from Frankia alni (strain DSM 45986 / CECT 9034 / ACN14a).